The primary structure comprises 199 residues: Probable cobalt-precorrin-6B C(15)-methyltransferase (decarboxylating) (199 aa).

Residues Thr24, 48–52 (GCGTG), Asp72, and Ala101 each bind S-adenosyl-L-methionine.

This sequence belongs to the methyltransferase superfamily. Archaeal-type CbiT family.

It catalyses the reaction Co-precorrin-6B + S-adenosyl-L-methionine = Co-precorrin-7 + S-adenosyl-L-homocysteine + CO2. It functions in the pathway cofactor biosynthesis; adenosylcobalamin biosynthesis; cob(II)yrinate a,c-diamide from sirohydrochlorin (anaerobic route): step 8/10. In terms of biological role, catalyzes the methylation of C-15 in cobalt-precorrin-6B followed by the decarboxylation of C-12 to form cobalt-precorrin-7. The protein is Probable cobalt-precorrin-6B C(15)-methyltransferase (decarboxylating) of Saccharolobus solfataricus (strain ATCC 35092 / DSM 1617 / JCM 11322 / P2) (Sulfolobus solfataricus).